The sequence spans 502 residues: Glutamate--tRNA ligase (502 aa).

Residues 21–31 (PSPTGVPHVGM) carry the 'HIGH' region motif. The 'KMSKS' region motif lies at 265 to 269 (KLSKR). Lysine 268 is a binding site for ATP.

The protein belongs to the class-I aminoacyl-tRNA synthetase family. Glutamate--tRNA ligase type 1 subfamily. As to quaternary structure, monomer.

The protein localises to the cytoplasm. The catalysed reaction is tRNA(Glu) + L-glutamate + ATP = L-glutamyl-tRNA(Glu) + AMP + diphosphate. Catalyzes the attachment of glutamate to tRNA(Glu) in a two-step reaction: glutamate is first activated by ATP to form Glu-AMP and then transferred to the acceptor end of tRNA(Glu). This Mycobacterium leprae (strain TN) protein is Glutamate--tRNA ligase.